Here is a 486-residue protein sequence, read N- to C-terminus: Ribulose bisphosphate carboxylase large chain (486 aa).

Substrate-binding residues include N125 and T175. Catalysis depends on K177, which acts as the Proton acceptor. Residue K179 participates in substrate binding. Residues K203, D205, and E206 each contribute to the Mg(2+) site. K203 is subject to N6-carboxylysine. H295 acts as the Proton acceptor in catalysis. Substrate is bound by residues R296, H328, and S380.

This sequence belongs to the RuBisCO large chain family. Type I subfamily. Heterohexadecamer of 8 large chains and 8 small chains. Mg(2+) serves as cofactor.

It catalyses the reaction 2 (2R)-3-phosphoglycerate + 2 H(+) = D-ribulose 1,5-bisphosphate + CO2 + H2O. The catalysed reaction is D-ribulose 1,5-bisphosphate + O2 = 2-phosphoglycolate + (2R)-3-phosphoglycerate + 2 H(+). RuBisCO catalyzes two reactions: the carboxylation of D-ribulose 1,5-bisphosphate, the primary event in carbon dioxide fixation, as well as the oxidative fragmentation of the pentose substrate. Both reactions occur simultaneously and in competition at the same active site. The polypeptide is Ribulose bisphosphate carboxylase large chain (Aurantimonas manganoxydans (strain ATCC BAA-1229 / DSM 21871 / SI85-9A1)).